Reading from the N-terminus, the 517-residue chain is General transcription factor IIF subunit 1 (517 aa).

N-acetylalanine is present on A2. T156 is modified (phosphothreonine). Residues 178–458 (QQRRLKDQDQ…SGDVQVTEDA (281 aa)) form a disordered region. The segment covering 210 to 225 (LEDDLEMSSDDSEASG) has biased composition (acidic residues). A phosphoserine mark is found at S217, S218, S221, and S224. Residues 232-251 (PKAKKKAPPSKGGRKKKKKK) show a composition bias toward basic residues. Acidic residues-rich tracts occupy residues 255–270 (DEAF…EGQE) and 303–325 (EQSE…EEEE). T331 is modified (phosphothreonine). Positions 343–355 (EESDSSEESDIDS) are enriched in acidic residues. Positions 364–374 (AKKKTPPKRER) are enriched in basic residues. Phosphoserine is present on residues S377, S380, S381, and S385. Positions 377-391 (SGGSSRGNSRPGTPS) are enriched in low complexity. T389 is modified (phosphothreonine). Phosphoserine is present on S391. The span at 392 to 401 (TEAGSTSSTL) shows a compositional bias: polar residues. K407 is modified (N6-acetyllysine). Residues 428 to 452 (GPQSLSGKSTPQPQSGKSTPSSGDV) are compositionally biased toward polar residues. 3 positions are modified to phosphoserine: S431, S433, and S436. T437 and T446 each carry phosphothreonine. Residue S449 is modified to Phosphoserine.

This sequence belongs to the TFIIF alpha subunit family. Heterodimer of an alpha and a beta subunit. Interacts with GTF2F2, CTDP1, TAF6/TAFII80 and URI1. Interacts with GTF2B (via C-terminus and preferentially via acetylated form); this interaction prevents binding of GTF2B to GTF2F2. Part of TBP-based Pol II pre-initiation complex (PIC), in which Pol II core assembles with general transcription factors and other specific initiation factors including GTF2E1, GTF2E2, GTF2F1, GTF2F2, TCEA1, ERCC2, ERCC3, GTF2H2, GTF2H3, GTF2H4, GTF2H5, GTF2A1, GTF2A2, GTF2B and TBP; this large multi-subunit PIC complex mediates DNA unwinding and targets Pol II core to the transcription start site where the first phosphodiester bond forms. In terms of processing, phosphorylated on Ser and other residues by TAF1 and casein kinase II-like kinases.

The protein localises to the nucleus. Functionally, TFIIF is a general transcription initiation factor that binds to RNA polymerase II and helps to recruit it to the initiation complex in collaboration with TFIIB. It promotes transcription elongation. In Bos taurus (Bovine), this protein is General transcription factor IIF subunit 1 (GTF2F1).